Here is a 393-residue protein sequence, read N- to C-terminus: Lipoyl synthase, mitochondrial (393 aa).

The [4Fe-4S] cluster site is built by C111, C116, C122, C142, C146, C149, and S357. In terms of domain architecture, Radical SAM core spans E127–L346.

This sequence belongs to the radical SAM superfamily. Lipoyl synthase family. It depends on [4Fe-4S] cluster as a cofactor.

It localises to the mitochondrion. It carries out the reaction [[Fe-S] cluster scaffold protein carrying a second [4Fe-4S](2+) cluster] + N(6)-octanoyl-L-lysyl-[protein] + 2 oxidized [2Fe-2S]-[ferredoxin] + 2 S-adenosyl-L-methionine + 4 H(+) = [[Fe-S] cluster scaffold protein] + N(6)-[(R)-dihydrolipoyl]-L-lysyl-[protein] + 4 Fe(3+) + 2 hydrogen sulfide + 2 5'-deoxyadenosine + 2 L-methionine + 2 reduced [2Fe-2S]-[ferredoxin]. It functions in the pathway protein modification; protein lipoylation via endogenous pathway; protein N(6)-(lipoyl)lysine from octanoyl-[acyl-carrier-protein]: step 2/2. Its function is as follows. Catalyzes the radical-mediated insertion of two sulfur atoms into the C-6 and C-8 positions of the octanoyl moiety bound to the lipoyl domains of lipoate-dependent enzymes, thereby converting the octanoylated domains into lipoylated derivatives. The polypeptide is Lipoyl synthase, mitochondrial (Aedes aegypti (Yellowfever mosquito)).